We begin with the raw amino-acid sequence, 395 residues long: 1-deoxy-D-xylulose 5-phosphate reductoisomerase (395 aa).

Residues Thr-10, Gly-11, Ser-12, Ile-13, Arg-37, Gln-38, and Asn-124 each contribute to the NADPH site. Lys-125 is a 1-deoxy-D-xylulose 5-phosphate binding site. Glu-126 is an NADPH binding site. Asp-150 contributes to the Mn(2+) binding site. 1-deoxy-D-xylulose 5-phosphate is bound by residues Ser-151, Glu-152, Ser-179, and His-202. A Mn(2+)-binding site is contributed by Glu-152. Gly-208 provides a ligand contact to NADPH. Ser-215, Asn-220, Lys-221, and Glu-224 together coordinate 1-deoxy-D-xylulose 5-phosphate. Glu-224 lines the Mn(2+) pocket.

It belongs to the DXR family. Requires Mg(2+) as cofactor. It depends on Mn(2+) as a cofactor.

The enzyme catalyses 2-C-methyl-D-erythritol 4-phosphate + NADP(+) = 1-deoxy-D-xylulose 5-phosphate + NADPH + H(+). It participates in isoprenoid biosynthesis; isopentenyl diphosphate biosynthesis via DXP pathway; isopentenyl diphosphate from 1-deoxy-D-xylulose 5-phosphate: step 1/6. Its function is as follows. Catalyzes the NADPH-dependent rearrangement and reduction of 1-deoxy-D-xylulose-5-phosphate (DXP) to 2-C-methyl-D-erythritol 4-phosphate (MEP). The polypeptide is 1-deoxy-D-xylulose 5-phosphate reductoisomerase (Cupriavidus pinatubonensis (strain JMP 134 / LMG 1197) (Cupriavidus necator (strain JMP 134))).